The primary structure comprises 231 residues: Uroporphyrinogen-III C-methyltransferase (231 aa).

S-adenosyl-L-homocysteine is bound by residues Pro10, 85–87 (GGD), 115–116 (TS), Met166, and Ala218.

The protein belongs to the precorrin methyltransferase family. As to quaternary structure, homodimer.

It catalyses the reaction uroporphyrinogen III + 2 S-adenosyl-L-methionine = precorrin-2 + 2 S-adenosyl-L-homocysteine + H(+). The catalysed reaction is uroporphyrinogen III + S-adenosyl-L-methionine = precorrin-1 + S-adenosyl-L-homocysteine + H(+). The enzyme catalyses precorrin-1 + S-adenosyl-L-methionine = precorrin-2 + S-adenosyl-L-homocysteine. The protein operates within cofactor biosynthesis; adenosylcobalamin biosynthesis; precorrin-2 from uroporphyrinogen III: step 1/1. Does not show substrate inhibition at uroporphyrinogen III concentrations of up to 20 uM, in contrast to SUMT from Sinorhizobium (previously believed to be P.denitrificans). Catalyzes the two successive C-2 and C-7 methylation reactions involved in the conversion of uroporphyrinogen III to precorrin-2 via the intermediate formation of precorrin-1. It is a step in the biosynthesis of both cobalamin (vitamin B12) and coenzyme F430. The protein is Uroporphyrinogen-III C-methyltransferase (cobA) of Methanobacterium ivanovii.